A 148-amino-acid polypeptide reads, in one-letter code: Protein F15 (148 aa).

The protein belongs to the poxviridae F15 protein family.

This is Protein F15 from Fowlpox virus (strain NVSL) (FPV).